Reading from the N-terminus, the 236-residue chain is Hydroxyacylglutathione hydrolase (236 aa).

Residues histidine 52, histidine 54, aspartate 56, histidine 57, histidine 108, aspartate 125, and histidine 163 each contribute to the Zn(2+) site.

This sequence belongs to the metallo-beta-lactamase superfamily. Glyoxalase II family. As to quaternary structure, monomer. Zn(2+) serves as cofactor.

The catalysed reaction is an S-(2-hydroxyacyl)glutathione + H2O = a 2-hydroxy carboxylate + glutathione + H(+). It functions in the pathway secondary metabolite metabolism; methylglyoxal degradation; (R)-lactate from methylglyoxal: step 2/2. Functionally, thiolesterase that catalyzes the hydrolysis of S-D-lactoyl-glutathione to form glutathione and D-lactic acid. The chain is Hydroxyacylglutathione hydrolase from Mannheimia succiniciproducens (strain KCTC 0769BP / MBEL55E).